The following is a 154-amino-acid chain: MSLATLDATQHPNLPASAATLFKAKAHKKLSFEQIAQHIGRNEVATAALFYGQAKASPEDIQKLSELLNISPQVLEEQLSGFPDRGRSVEMPPKEPLIYRLYEIVQNYGYAYKAVLNEKFGDGIMSAISFSTKVEKETDADGNNWAVITLRGKW.

Residues R100, E103, and S126 contribute to the active site.

It belongs to the cyanase family.

The enzyme catalyses cyanate + hydrogencarbonate + 3 H(+) = NH4(+) + 2 CO2. Catalyzes the reaction of cyanate with bicarbonate to produce ammonia and carbon dioxide. The chain is Cyanate hydratase from Aspergillus fumigatus (strain ATCC MYA-4609 / CBS 101355 / FGSC A1100 / Af293) (Neosartorya fumigata).